The sequence spans 1029 residues: Error-prone DNA polymerase (1029 aa).

It belongs to the DNA polymerase type-C family. DnaE2 subfamily.

It localises to the cytoplasm. The catalysed reaction is DNA(n) + a 2'-deoxyribonucleoside 5'-triphosphate = DNA(n+1) + diphosphate. Functionally, DNA polymerase involved in damage-induced mutagenesis and translesion synthesis (TLS). It is not the major replicative DNA polymerase. This chain is Error-prone DNA polymerase, found in Saccharophagus degradans (strain 2-40 / ATCC 43961 / DSM 17024).